A 174-amino-acid polypeptide reads, in one-letter code: MKKLEEYVRSIPDFPEEGIIFRDVTSVLQDKDSLKMSIDQMQENLNGLDFDVIVGPESRGFIFGVPIAYNLNKAFIPVRKKGKLPCETVEMEYALEYGTATIEMHKDSIKPGQKVVIIDDLIATGGTIEAITKLIEQLGGEVVKIVFLMELEGLMGREKLKGYDIASVIKYAGK.

It belongs to the purine/pyrimidine phosphoribosyltransferase family. In terms of assembly, homodimer.

It localises to the cytoplasm. It catalyses the reaction AMP + diphosphate = 5-phospho-alpha-D-ribose 1-diphosphate + adenine. It participates in purine metabolism; AMP biosynthesis via salvage pathway; AMP from adenine: step 1/1. Catalyzes a salvage reaction resulting in the formation of AMP, that is energically less costly than de novo synthesis. The chain is Adenine phosphoribosyltransferase from Lachnoclostridium phytofermentans (strain ATCC 700394 / DSM 18823 / ISDg) (Clostridium phytofermentans).